Consider the following 398-residue polypeptide: Cytochrome b (398 aa).

A run of 4 helical transmembrane segments spans residues 38-58 (FGPL…FLAM), 82-104 (WFLR…FHMF), 119-139 (VRCS…IGYV), and 185-205 (FFSL…LHLG). 2 residues coordinate heme b: His88 and His102. Heme b contacts are provided by His189 and His203. Position 208 (His208) interacts with a ubiquinone. Transmembrane regions (helical) follow at residues 231-251 (YYVK…IFIF), 295-316 (AGGV…FLNQ), 328-348 (IYHI…WIGC), and 355-374 (FVTI…AIMP).

The protein belongs to the cytochrome b family. The main subunits of complex b-c1 are: cytochrome b, cytochrome c1 and the Rieske protein. It depends on heme b as a cofactor.

Its subcellular location is the mitochondrion inner membrane. Component of the ubiquinol-cytochrome c reductase complex (complex III or cytochrome b-c1 complex) that is part of the mitochondrial respiratory chain. The b-c1 complex mediates electron transfer from ubiquinol to cytochrome c. Contributes to the generation of a proton gradient across the mitochondrial membrane that is then used for ATP synthesis. The protein is Cytochrome b (MT-CYB) of Daucus carota (Wild carrot).